A 52-amino-acid chain; its full sequence is Large ribosomal subunit protein bL33 (52 aa).

It belongs to the bacterial ribosomal protein bL33 family.

In Campylobacter jejuni subsp. jejuni serotype O:6 (strain 81116 / NCTC 11828), this protein is Large ribosomal subunit protein bL33.